The primary structure comprises 323 residues: MILNTLNSLKIVFAGTDKFSKDHLKILVTNTTHKILGVITKPDQPLGRGKQITSSLTKKLAKKLKIPVFQPTALNTSTFYNQIYNLNADIIIVVSYGKIIPQLILNIFPLGGINVHTSLLPRWRGPSPIQSALLNGDKLTGITIIKMNNNIDTGDIIYSSSCIINKSDTSVTLQNKLKILSCQGLIQVLKNFKSSYFPIRQSNLATYSNKINKEDAKLIWLKSAIQLERSIRAYNPWPICYFKINNQLSIKVWSANVIIHFNQHKYQIGEIILINKHGMQIKTSKNILNITTVQLPGKKIMHANNLCNSKNKWCIPGTKLTNT.

Residue serine 118–proline 121 coordinates (6S)-5,6,7,8-tetrahydrofolate.

This sequence belongs to the Fmt family.

The enzyme catalyses L-methionyl-tRNA(fMet) + (6R)-10-formyltetrahydrofolate = N-formyl-L-methionyl-tRNA(fMet) + (6S)-5,6,7,8-tetrahydrofolate + H(+). Functionally, attaches a formyl group to the free amino group of methionyl-tRNA(fMet). The formyl group appears to play a dual role in the initiator identity of N-formylmethionyl-tRNA by promoting its recognition by IF2 and preventing the misappropriation of this tRNA by the elongation apparatus. The sequence is that of Methionyl-tRNA formyltransferase from Buchnera aphidicola subsp. Baizongia pistaciae (strain Bp).